The following is a 307-amino-acid chain: Recombination-associated protein RdgC (307 aa).

The protein belongs to the RdgC family.

The protein localises to the cytoplasm. It is found in the nucleoid. May be involved in recombination. This chain is Recombination-associated protein RdgC, found in Burkholderia orbicola (strain MC0-3).